A 397-amino-acid chain; its full sequence is UDP-GlcNAc:betaGal beta-1,3-N-acetylglucosaminyltransferase 7 (397 aa).

The Cytoplasmic segment spans residues 1-6 (MSLWKK). The chain crosses the membrane as a helical span at residues 7-26 (TLYKSVCLALALLVAVTVFQ). Topologically, residues 27–397 (RSVTPGQFLQ…LTCSVKFQVL (371 aa)) are lumenal. Residues N84, N90, N210, and N387 are each glycosylated (N-linked (GlcNAc...) asparagine).

This sequence belongs to the glycosyltransferase 31 family. As to expression, strongly expressed in placenta and colon. Moderately expressed in lung, stomach, small intestine and kidney. Very weakly expressed in cerebrum, cerebellum, heart and testis.

It localises to the golgi apparatus membrane. It participates in protein modification; protein glycosylation. N-acetyl glucosamine (GlcNAc) transferase that catalyzes the transfer of GlcNAc via a beta1-&gt;3 linkage from UDP-GlcNAc to the non-reducing terminal galactose (Gal) in the linearly growing chain of N- and O-linked keratan sulfate proteoglycans. Cooperates with B4GALT4 galactosyltransferase and CHST6 and CHST1 sulfotransferases to construct and elongate mono- and disulfated disaccharide units [-&gt;3Galbeta1-&gt;4(6-sulfoGlcNAcbeta)1-&gt;] and [-&gt;3(6-sulfoGalbeta)1-&gt;4(6-sulfoGlcNAcbeta)1-&gt;] within keratan sulfate polymer. Involved in biosynthesis of N-linked keratan sulfate proteoglycans in cornea, with an impact on proteoglycan fibril organization and corneal transparency. May play a role in the maintenance of tissue architecture by suppressing cellular motility and invasion. This chain is UDP-GlcNAc:betaGal beta-1,3-N-acetylglucosaminyltransferase 7 (B3gnt7), found in Mus musculus (Mouse).